The following is a 90-amino-acid chain: Chaplin-G (90 aa).

An N-terminal signal peptide occupies residues 1–27 (MSRIAKAAGVALGTGAVVLSGTGMAMA). A Chaplin domain is found at 38 to 78 (SPGVLSGNVVQVPVHVPVNLCGNTIDVIGLLNPAFGNACEN). Residues C58 and C76 are joined by a disulfide bond.

This sequence belongs to the chaplin family. Short chaplin subfamily.

The protein resides in the cell surface. It is found in the secreted. It localises to the cell wall. In terms of biological role, one of 8 partially redundant surface-active proteins required for efficient formation of aerial mycelium; the short chaplins assemble into a hydrophobic, amyloidal fibrillar surface layer that envelopes and protects aerial hyphae and spores, presumably anchored to the long chaplins. Chaplins have an overlapping function with the surface-active SapB peptide; chaplins are essential on minimal medium while on rich medium both chaplins and SapB are required for efficient aerial hyphae formation. Chaplins are also involved in cell attachment to a hydrophobic surface. Forms amyloid fibrils in vitro probably composed of stacked beta-sheets, at low extracellular concentrations individually restores the ability to form aerial hyphae to a chaplin-deficient strain. A small chaplin extract (ChpD, ChpE, ChpF, ChpG and ChpH) self-assembles into 2 different amyloids; small fibrils at the air-water interface form an amphipathic membrane that resembles spore-surface structures involved in aerial hyphae formation, and hydrophilic fibrils in solution that resemble the fibers that attach cells to a hydrophobic surface. At the air-water interface the hydrophilic surface is in contact with water (probably equivalent to the peptidoglycan layer), while the hydrophobic face is exposed to the air, making the surface of the aerial hyphae hydrophobic. A small chaplin extract applied to a chaplin-deficient strain restores aerial hyphae formation. The small chaplin extract forms an amyloid-like structure similar to that seen on the surface of cells without rodlets (rdlA-rdlB deletions), and is highly surface active, reducing surface tension from 72 to 26 mJ/m(2), which probably allows escape of hyphae from an aqueous environment into air. ChpF and ChpG are sufficient to restore the rodlet layer and hydrophobicity to a strain deleted for the other 6 chaplin genes. In Streptomyces coelicolor (strain ATCC BAA-471 / A3(2) / M145), this protein is Chaplin-G.